Reading from the N-terminus, the 409-residue chain is Failed axon connections homolog (409 aa).

Residues Tyr-68–Ile-88 form a helical membrane-spanning segment. A disordered region spans residues Asp-372–Lys-409.

It belongs to the FAX family.

The protein localises to the membrane. May play a role in axonal development. The protein is Failed axon connections homolog (Faxc) of Rattus norvegicus (Rat).